A 100-amino-acid polypeptide reads, in one-letter code: NADH-quinone oxidoreductase subunit K (100 aa).

3 consecutive transmembrane segments (helical) span residues 4-24 (VTWY…GVLL), 29-49 (LIVM…FLAF), and 61-81 (IAFF…AVVI).

This sequence belongs to the complex I subunit 4L family. As to quaternary structure, NDH-1 is composed of 14 different subunits. Subunits NuoA, H, J, K, L, M, N constitute the membrane sector of the complex.

The protein localises to the cell inner membrane. The enzyme catalyses a quinone + NADH + 5 H(+)(in) = a quinol + NAD(+) + 4 H(+)(out). In terms of biological role, NDH-1 shuttles electrons from NADH, via FMN and iron-sulfur (Fe-S) centers, to quinones in the respiratory chain. The immediate electron acceptor for the enzyme in this species is believed to be ubiquinone. Couples the redox reaction to proton translocation (for every two electrons transferred, four hydrogen ions are translocated across the cytoplasmic membrane), and thus conserves the redox energy in a proton gradient. The polypeptide is NADH-quinone oxidoreductase subunit K (Anaeromyxobacter sp. (strain Fw109-5)).